Consider the following 340-residue polypeptide: Galactoside alpha-(1,2)-fucosyltransferase 2 (340 aa).

Residues 1–7 (MLSMQAS) lie on the Cytoplasmic side of the membrane. A helical; Signal-anchor for type II membrane protein transmembrane segment spans residues 8–28 (FFFPTGPFILFVFTASTIFHL). Over 29–340 (QQRMVKIQPT…EADLSPLLKH (312 aa)) the chain is Lumenal. Asn-185, Asn-251, Asn-279, and Asn-305 each carry an N-linked (GlcNAc...) asparagine glycan.

The protein localises to the golgi apparatus. It is found in the golgi stack membrane. The enzyme catalyses a beta-D-galactosyl-(1-&gt;3)-N-acetyl-beta-D-glucosaminyl derivative + GDP-beta-L-fucose = an alpha-L-Fuc-(1-&gt;2)-beta-D-Gal-(1-&gt;3)-beta-D-GlcNAc derivative + GDP + H(+). It carries out the reaction a beta-D-galactosyl-(1-&gt;4)-N-acetyl-beta-D-glucosaminyl derivative + GDP-beta-L-fucose = an alpha-L-Fuc-(1-&gt;2)-beta-D-Gal-(1-&gt;4)-beta-D-GlcNAc derivative + GDP + H(+). It catalyses the reaction a neolactoside nLc4Cer + GDP-beta-L-fucose = a neolactoside IV(2)-alpha-Fuc-nLc4Cer + GDP + H(+). The catalysed reaction is a neolactoside nLc4Cer(d18:1(4E)) + GDP-beta-L-fucose = a neolactoside IV(2)-alpha-Fuc-nLc4Cer(d18:1(4E)) + GDP + H(+). The enzyme catalyses a ganglioside GM1 + GDP-beta-L-fucose = a ganglioside Fuc-GM1 + GDP + H(+). It carries out the reaction a ganglioside GA1 + GDP-beta-L-fucose = a ganglioside Fuc-GA1 + GDP + H(+). It catalyses the reaction Lc4Cer + GDP-beta-L-fucose = alpha-L-fucosyl-(1-&gt;2)-beta-D-galactosyl-(1-&gt;3)-N-acetyl-beta-D-glucosaminyl-(1-&gt;3)-beta-D-galactosyl-(1-&gt;4)-beta-D-glucosyl-(1&lt;-&gt;1')-ceramide + GDP + H(+). The catalysed reaction is a beta-D-Gal-(1-&gt;3)-beta-D-GlcNAc-(1-&gt;3)-beta-D-Gal-(1-&gt;4)-beta-D-Glc-(1&lt;-&gt;1')-Cer(d18:1(4E)) + GDP-beta-L-fucose = alpha-L-fucosyl-(1-&gt;2)- beta-D-galactosyl-(1-&gt;3)-N-acetyl-beta-D-glucosaminyl-(1-&gt;3)-beta-D-galactosyl-(1-&gt;4)-beta-D-glucosyl-(1&lt;-&gt;1')-N-acylsphing-4-enine + GDP + H(+). The enzyme catalyses a ganglioside GD1b + GDP-beta-L-fucose = a ganglioside Fuc-GD1b + GDP + H(+). It carries out the reaction a ganglioside GM1 (d18:1(4E)) + GDP-beta-L-fucose = a ganglioside Fuc-GM1 (d18:1(4E)) + GDP + H(+). It catalyses the reaction a globoside GalGb4Cer (d18:1(4E)) + GDP-beta-L-fucose = a globoside Globo-H (d18:1(4E)) + GDP + H(+). The catalysed reaction is a lactoside III(4)-a-Fuc-Lc4Cer + GDP-beta-L-fucose = a lactoside IV(2),III(4)-a-[Fuc]2-Lc4Cer + GDP + H(+). The enzyme catalyses beta-D-galactosyl-(1-&gt;3)-N-acetyl-D-galactosamine + GDP-beta-L-fucose = alpha-L-fucosyl-(1-&gt;2)-beta-D-galactosyl-(1-&gt;3)-N-acetyl-D-galactosamine + GDP + H(+). Its pathway is protein modification; protein glycosylation. In terms of biological role, catalyzes the transfer of L-fucose, from a guanosine diphosphate-beta-L-fucose, to the terminal galactose on both O- and N-linked glycans chains of cell surface glycoproteins and glycolipids and the resulting epitope regulates several processes such as cell-cell interaction including host-microbe interaction, cell surface expression and cell proliferation. Preferentially fucosylates gangliosides GA1 and GM1 in the antrum, cecum and colon and in the female reproductive organs. Fucosylated host glycoproteins or glycolipids mediate interaction with intestinal microbiota influencing its composition. Creates a soluble precursor oligosaccharide FuC-alpha ((1,2)Galbeta-) called the H antigen which is an essential substrate for the final step in the soluble ABO blood group antigen synthesis pathway. The sequence is that of Galactoside alpha-(1,2)-fucosyltransferase 2 from Sus scrofa (Pig).